A 233-amino-acid polypeptide reads, in one-letter code: Cytochrome c oxidase subunit 3 (233 aa).

Helical transmembrane passes span 62-82 (VVLFLVAESAIFLGLFTAYLI), 98-118 (LELLLPGVNSIILISSSFVMH), 135-155 (WFGITAAMGIIFLAGQMYEYF), and 172-192 (VLTGFHGLHVTFGLLLILSVL).

Belongs to the cytochrome c oxidase subunit 3 family.

It is found in the cell membrane. The enzyme catalyses 4 Fe(II)-[cytochrome c] + O2 + 8 H(+)(in) = 4 Fe(III)-[cytochrome c] + 2 H2O + 4 H(+)(out). The chain is Cytochrome c oxidase subunit 3 (ctaE) from Synechocystis sp. (strain ATCC 27184 / PCC 6803 / Kazusa).